The following is a 58-amino-acid chain: Large ribosomal subunit protein bL32 (58 aa).

The disordered stretch occupies residues 1 to 24; that stretch reads MAVPKKKTSKSKRDKRKATWKRKA.

The protein belongs to the bacterial ribosomal protein bL32 family.

This is Large ribosomal subunit protein bL32 from Synechococcus sp. (strain ATCC 27144 / PCC 6301 / SAUG 1402/1) (Anacystis nidulans).